The sequence spans 192 residues: EF-hand protein 5 (192 aa).

A disordered region spans residues 1-36 (MKDKAPVSSQQDHFSRGGAVGGKPISDVRGTSRPFY). 4 EF-hand domains span residues 46–80 (AELA…GLHL), 81–118 (SDEE…EVDD), 119–154 (TMLE…GGEC), and 155–190 (STPE…HRLN). Positions 100, 102, 107, 132, and 136 each coordinate Ca(2+).

In Trypanosoma brucei brucei, this protein is EF-hand protein 5.